A 448-amino-acid polypeptide reads, in one-letter code: Alginate biosynthesis transcriptional regulatory protein AlgB (448 aa).

The Response regulatory domain maps to arginine 10–leucine 124. Aspartate 59 carries the post-translational modification 4-aspartylphosphate. Positions leucine 147–isoleucine 376 constitute a Sigma-54 factor interaction domain. Residues glycine 175 to glycine 182 and alanine 238 to glutamate 247 each bind ATP. Positions leucine 425–lysine 444 form a DNA-binding region, H-T-H motif.

The protein operates within glycan biosynthesis; alginate biosynthesis [regulation]. Positive regulator of the alginate biosynthetic gene algD. The sequence is that of Alginate biosynthesis transcriptional regulatory protein AlgB (algB) from Pseudomonas syringae pv. tomato (strain ATCC BAA-871 / DC3000).